The primary structure comprises 380 residues: Succinyl-diaminopimelate desuccinylase (380 aa).

Position 69 (His69) interacts with Zn(2+). Asp71 is an active-site residue. Asp102 is a binding site for Zn(2+). Glu135 serves as the catalytic Proton acceptor. Residues Glu136, Glu164, and His353 each coordinate Zn(2+).

Belongs to the peptidase M20A family. DapE subfamily. In terms of assembly, homodimer. The cofactor is Zn(2+). It depends on Co(2+) as a cofactor.

It carries out the reaction N-succinyl-(2S,6S)-2,6-diaminopimelate + H2O = (2S,6S)-2,6-diaminopimelate + succinate. It participates in amino-acid biosynthesis; L-lysine biosynthesis via DAP pathway; LL-2,6-diaminopimelate from (S)-tetrahydrodipicolinate (succinylase route): step 3/3. Its function is as follows. Catalyzes the hydrolysis of N-succinyl-L,L-diaminopimelic acid (SDAP), forming succinate and LL-2,6-diaminopimelate (DAP), an intermediate involved in the bacterial biosynthesis of lysine and meso-diaminopimelic acid, an essential component of bacterial cell walls. This Cereibacter sphaeroides (strain KD131 / KCTC 12085) (Rhodobacter sphaeroides) protein is Succinyl-diaminopimelate desuccinylase.